Consider the following 483-residue polypeptide: Aspartyl/glutamyl-tRNA(Asn/Gln) amidotransferase subunit B (483 aa).

The protein belongs to the GatB/GatE family. GatB subfamily. In terms of assembly, heterotrimer of A, B and C subunits.

The catalysed reaction is L-glutamyl-tRNA(Gln) + L-glutamine + ATP + H2O = L-glutaminyl-tRNA(Gln) + L-glutamate + ADP + phosphate + H(+). The enzyme catalyses L-aspartyl-tRNA(Asn) + L-glutamine + ATP + H2O = L-asparaginyl-tRNA(Asn) + L-glutamate + ADP + phosphate + 2 H(+). Functionally, allows the formation of correctly charged Asn-tRNA(Asn) or Gln-tRNA(Gln) through the transamidation of misacylated Asp-tRNA(Asn) or Glu-tRNA(Gln) in organisms which lack either or both of asparaginyl-tRNA or glutaminyl-tRNA synthetases. The reaction takes place in the presence of glutamine and ATP through an activated phospho-Asp-tRNA(Asn) or phospho-Glu-tRNA(Gln). The sequence is that of Aspartyl/glutamyl-tRNA(Asn/Gln) amidotransferase subunit B from Rickettsia conorii (strain ATCC VR-613 / Malish 7).